The primary structure comprises 616 residues: General alpha-glucoside permease (616 aa).

The Cytoplasmic portion of the chain corresponds to 1 to 115 (MKNIISLVSK…AALWSILVST (115 aa)). A compositionally biased stretch (basic and acidic residues) spans 15 to 27 (SKNEDKNISESSR). Residues 15 to 40 (SKNEDKNISESSRDIVNQQEVFNTED) form a disordered region. A helical membrane pass occupies residues 116-136 (TLVMEGYDTALLSALYALPVF). Residues 137 to 160 (QRKFGTLNGEGSYEITSQWQIGLN) are Extracellular-facing. The helical transmembrane segment at 161–181 (MCVLCGEMIGLQITTYMVEFM) threads the bilayer. Over 182-191 (GNRYTMITAL) the chain is Cytoplasmic. Residues 192–212 (GLLTAYIFILYYCKSLAMIAV) traverse the membrane as a helical segment. Topologically, residues 213–214 (GQ) are extracellular. A helical membrane pass occupies residues 215–235 (ILSAIPWGCFQSLAVTYASEV). The Cytoplasmic portion of the chain corresponds to 236–242 (CPLALRY). A helical transmembrane segment spans residues 243–263 (YMTSYSNICWLFGQIFASGIM). Topologically, residues 264 to 278 (KNSQENLGNSDLGYK) are extracellular. Residues 279–299 (LPFALQWIWPAPLMIGIFFAP) form a helical membrane-spanning segment. Residues 300–373 (ESPWWLVRKD…VNGRRTRLAC (74 aa)) are Cytoplasmic-facing. Residues 374-394 (LTWVAQNSSGAVLLGYSTYFF) traverse the membrane as a helical segment. At 395 to 404 (ERAGMATDKA) the chain is on the extracellular side. A helical membrane pass occupies residues 405 to 425 (FTFSLIQYCLGLAGTLCSWVI). Residues 426–433 (SGRVGRWT) are Cytoplasmic-facing. A helical membrane pass occupies residues 434 to 454 (ILTYGLAFQMVCLFIIGGMGF). Residues 455–466 (GSGSSASNGAGG) are Extracellular-facing. A helical transmembrane segment spans residues 467-487 (LLLALSFFYNAGIGAVVYCIV). Over 488–504 (AEIPSAELRTKTIVLAR) the chain is Cytoplasmic. The helical transmembrane segment at 505-525 (ICYNLMAVINAILTPYMLNVS) threads the bilayer. At 526-532 (DWNWGAK) the chain is on the extracellular side. A helical membrane pass occupies residues 533–553 (TGLYWGGFTAVTLAWVIIDLP). The Cytoplasmic portion of the chain corresponds to 554–616 (ETTGRTFSEI…QRELNAADKC (63 aa)). The interval 587-616 (GKTQHDSLADESISQSSSIKQRELNAADKC) is disordered. The span at 606 to 616 (KQRELNAADKC) shows a compositional bias: basic and acidic residues.

It belongs to the major facilitator superfamily. Sugar transporter (TC 2.A.1.1) family.

Its subcellular location is the cell membrane. Its function is as follows. High-affinity uptake of alpha-glucosides such as maltose, turanose, isomaltose, alpha-methylglucoside, maltotriose, palatinose, trehalose, melezitose and glucose. Acts with the concomitant transport of protons into the cell (symport system). Provides an alternative and minor mechanism for growth on trehalose carbon source by transporting trehalose into the cytoplasm for conversion to glucose by neutral trehalase NTH1. The sequence is that of General alpha-glucoside permease from Saccharomyces cerevisiae (strain CEN.PK113-7D) (Baker's yeast).